The chain runs to 562 residues: Dihydroxy-acid dehydratase (562 aa).

D78 contacts Mg(2+). C119 contacts [2Fe-2S] cluster. The Mg(2+) site is built by D120 and K121. K121 carries the post-translational modification N6-carboxylysine. Position 192 (C192) interacts with [2Fe-2S] cluster. A Mg(2+)-binding site is contributed by E450. S476 acts as the Proton acceptor in catalysis.

Belongs to the IlvD/Edd family. Homodimer. Requires [2Fe-2S] cluster as cofactor. It depends on Mg(2+) as a cofactor.

The catalysed reaction is (2R)-2,3-dihydroxy-3-methylbutanoate = 3-methyl-2-oxobutanoate + H2O. The enzyme catalyses (2R,3R)-2,3-dihydroxy-3-methylpentanoate = (S)-3-methyl-2-oxopentanoate + H2O. It functions in the pathway amino-acid biosynthesis; L-isoleucine biosynthesis; L-isoleucine from 2-oxobutanoate: step 3/4. Its pathway is amino-acid biosynthesis; L-valine biosynthesis; L-valine from pyruvate: step 3/4. Functions in the biosynthesis of branched-chain amino acids. Catalyzes the dehydration of (2R,3R)-2,3-dihydroxy-3-methylpentanoate (2,3-dihydroxy-3-methylvalerate) into 2-oxo-3-methylpentanoate (2-oxo-3-methylvalerate) and of (2R)-2,3-dihydroxy-3-methylbutanoate (2,3-dihydroxyisovalerate) into 2-oxo-3-methylbutanoate (2-oxoisovalerate), the penultimate precursor to L-isoleucine and L-valine, respectively. This is Dihydroxy-acid dehydratase from Nautilia profundicola (strain ATCC BAA-1463 / DSM 18972 / AmH).